A 106-amino-acid polypeptide reads, in one-letter code: Nucleoid-associated protein XOO1065 (106 aa).

Residues 80 to 89 (KIDAESKDRM) are compositionally biased toward basic and acidic residues. The disordered stretch occupies residues 80–106 (KIDAESKDRMGSATAGMQLPPGMKLPF).

It belongs to the YbaB/EbfC family. In terms of assembly, homodimer.

It localises to the cytoplasm. The protein localises to the nucleoid. Functionally, binds to DNA and alters its conformation. May be involved in regulation of gene expression, nucleoid organization and DNA protection. The sequence is that of Nucleoid-associated protein XOO1065 from Xanthomonas oryzae pv. oryzae (strain KACC10331 / KXO85).